Consider the following 379-residue polypeptide: UDP-N-acetylglucosamine--N-acetylmuramyl-(pentapeptide) pyrophosphoryl-undecaprenol N-acetylglucosamine transferase (379 aa).

UDP-N-acetyl-alpha-D-glucosamine-binding positions include 10–12, N124, R161, S195, and Q291; that span reads TAG.

The protein belongs to the glycosyltransferase 28 family. MurG subfamily.

Its subcellular location is the cell membrane. The enzyme catalyses di-trans,octa-cis-undecaprenyl diphospho-N-acetyl-alpha-D-muramoyl-L-alanyl-D-glutamyl-meso-2,6-diaminopimeloyl-D-alanyl-D-alanine + UDP-N-acetyl-alpha-D-glucosamine = di-trans,octa-cis-undecaprenyl diphospho-[N-acetyl-alpha-D-glucosaminyl-(1-&gt;4)]-N-acetyl-alpha-D-muramoyl-L-alanyl-D-glutamyl-meso-2,6-diaminopimeloyl-D-alanyl-D-alanine + UDP + H(+). It participates in cell wall biogenesis; peptidoglycan biosynthesis. Cell wall formation. Catalyzes the transfer of a GlcNAc subunit on undecaprenyl-pyrophosphoryl-MurNAc-pentapeptide (lipid intermediate I) to form undecaprenyl-pyrophosphoryl-MurNAc-(pentapeptide)GlcNAc (lipid intermediate II). This chain is UDP-N-acetylglucosamine--N-acetylmuramyl-(pentapeptide) pyrophosphoryl-undecaprenol N-acetylglucosamine transferase, found in Thermobifida fusca (strain YX).